The following is a 571-amino-acid chain: MRTSQYLLATQKETPADAVVISHQLMLRAGMIRKLASGLYTWLPMGLRVMRKVEAVVREEMNAAGALEVLMPSIQPAELWQESGRWEQYGPELLRLKDRHQRDFCVGPTHEEVITDLARNELSSYKQLPLNMYQIQTKFRDEIRPRFGLMRGREFIMKDAYSFHADQASLQETYDRMHQAYSNVFTRLGLDFRPVQADTGSIGGSYSHEFHVLAESGEDDVIFSDSSDYAANIEKAEAIPRETVRPAPTEELRLVDTPDAKTIAQLVENHGLAIEKTVKTLIVRGAEEGKLVALVVRGDHELNEIKAAKLEQVADPLIMATDAELREAIGAGAGSLGPLNLPLEVVIDRSVALMSDFGIGANIDDKHYFGVNWERDLPVPQVADLRNVVEGDPSPDGQGTLVIKRGIEVGHIFQLGTKYSEALKCQVLGENGKPVVLSMGCYGIGVSRVVAAAIEQSYDDKGIIWNDALAPFQIALVPLRYETDVVREATDKLYAELTAAGFEVLLDDRDKKTSPGIKFADMELIGIPHRIVVSDRGLADGNLEYKHRTEQDAQALPLNEVLTFLQARVRR.

The protein belongs to the class-II aminoacyl-tRNA synthetase family. ProS type 1 subfamily. Homodimer.

The protein resides in the cytoplasm. The catalysed reaction is tRNA(Pro) + L-proline + ATP = L-prolyl-tRNA(Pro) + AMP + diphosphate. In terms of biological role, catalyzes the attachment of proline to tRNA(Pro) in a two-step reaction: proline is first activated by ATP to form Pro-AMP and then transferred to the acceptor end of tRNA(Pro). As ProRS can inadvertently accommodate and process non-cognate amino acids such as alanine and cysteine, to avoid such errors it has two additional distinct editing activities against alanine. One activity is designated as 'pretransfer' editing and involves the tRNA(Pro)-independent hydrolysis of activated Ala-AMP. The other activity is designated 'posttransfer' editing and involves deacylation of mischarged Ala-tRNA(Pro). The misacylated Cys-tRNA(Pro) is not edited by ProRS. The polypeptide is Proline--tRNA ligase (Pseudomonas putida (strain GB-1)).